We begin with the raw amino-acid sequence, 231 residues long: Probable transglycosylase SceD (231 aa).

Residues 1–27 (MKKTLLASSLAVGLGIVAGNAGHEAHA) form the signal peptide. Positions 103 to 116 (APSAVQANQVQSQE) are enriched in polar residues. Residues 103 to 153 (APSAVQANQVQSQEVEAPQNAQTQQPQASTSNNSQVTATPTESKSSEGSSV) form a disordered region. The segment covering 119 to 137 (APQNAQTQQPQASTSNNSQ) has biased composition (low complexity). Over residues 138-153 (VTATPTESKSSEGSSV) the composition is skewed to polar residues.

Belongs to the transglycosylase family. SceD subfamily.

The protein resides in the secreted. Is able to cleave peptidoglycan and affects clumping and separation of bacterial cells. This Staphylococcus aureus (strain COL) protein is Probable transglycosylase SceD (sceD).